The following is a 165-amino-acid chain: Cytochrome b6-f complex subunit 4 (165 aa).

3 consecutive transmembrane segments (helical) span residues 36-56 (LLYIFPVVILGTIACNVGLAV), 95-115 (LLGVLLMVSVPAGLLTVPFLE), and 131-151 (TVFLIGTVVALWLGIGATLPI).

The protein belongs to the cytochrome b family. PetD subfamily. The 4 large subunits of the cytochrome b6-f complex are cytochrome b6, subunit IV (17 kDa polypeptide, petD), cytochrome f and the Rieske protein, while the 4 small subunits are petG, petL, petM and petN. The complex functions as a dimer.

The protein localises to the plastid. It is found in the chloroplast thylakoid membrane. Component of the cytochrome b6-f complex, which mediates electron transfer between photosystem II (PSII) and photosystem I (PSI), cyclic electron flow around PSI, and state transitions. The sequence is that of Cytochrome b6-f complex subunit 4 from Populus alba (White poplar).